The following is a 246-amino-acid chain: Transcription factor A, mitochondrial (246 aa).

Residues 1-42 (MAFLRSMWGVLSALGRSGAAVCIGCGSRLRSPFSFVYLPKCF) constitute a mitochondrion transit peptide. The segment at residues 50-118 (PKKPVSSYLR…VYKEKISRFK (69 aa)) is a DNA-binding region (HMG box 1). Residues Ser55, Ser56, and Ser61 each carry the phosphoserine; by PKA modification. Residue Thr122 is modified to Phosphothreonine. Residues 155–219 (PKRPRSAYNV…RYHNEMKSWE (65 aa)) constitute a DNA-binding region (HMG box 2). Ser160 is modified (phosphoserine; by PKA). Phosphoserine occurs at positions 193 and 195.

Monomer; binds DNA as a monomer. Homodimer. Component of the mitochondrial transcription initiation complex, composed at least of TFB2M, TFAM and POLRMT. In this complex TFAM recruits POLRMT to the promoter whereas TFB2M induces structural changes in POLRMT to enable promoter opening and trapping of the DNA non-template strand. Upon metabolic stress, forms a complex composed of FOXO3, SIRT3, TFAM and POLRMT. Interacts with TFB1M and TFB2M. Interacts with CLPX; this enhances DNA-binding. In terms of processing, phosphorylation by PKA within the HMG box 1 impairs DNA binding and promotes degradation by the AAA+ Lon protease.

Its subcellular location is the mitochondrion. It is found in the mitochondrion matrix. The protein localises to the mitochondrion nucleoid. In terms of biological role, binds to the mitochondrial light strand promoter and functions in mitochondrial transcription regulation. Component of the mitochondrial transcription initiation complex, composed at least of TFB2M, TFAM and POLRMT that is required for basal transcription of mitochondrial DNA. In this complex, TFAM recruits POLRMT to a specific promoter whereas TFB2M induces structural changes in POLRMT to enable promoter opening and trapping of the DNA non-template strand. Required for accurate and efficient promoter recognition by the mitochondrial RNA polymerase. Promotes transcription initiation from the HSP1 and the light strand promoter by binding immediately upstream of transcriptional start sites. Is able to unwind DNA. Bends the mitochondrial light strand promoter DNA into a U-turn shape via its HMG boxes. Required for maintenance of normal levels of mitochondrial DNA. May play a role in organizing and compacting mitochondrial DNA. This Trachypithecus cristatus (Silvered leaf-monkey) protein is Transcription factor A, mitochondrial.